Reading from the N-terminus, the 122-residue chain is MIQEQTYLKVADNSGGKIVKCIKVLNGTNKKYANIGEIIKVVVKTANFKSKIKKSQVLKAMIIRSKTGIKRLDGTIIKFNDNSVILLNNNEQIISTRVFGIILRELKNEKFAKLISLSNEII.

The protein belongs to the universal ribosomal protein uL14 family. Part of the 50S ribosomal subunit. Forms a cluster with proteins L3 and L19. In the 70S ribosome, L14 and L19 interact and together make contacts with the 16S rRNA in bridges B5 and B8.

Functionally, binds to 23S rRNA. Forms part of two intersubunit bridges in the 70S ribosome. The chain is Large ribosomal subunit protein uL14 from Carsonella ruddii (strain PV).